Reading from the N-terminus, the 226-residue chain is Killer cell lectin-like receptor subfamily E member 1 (226 aa).

The interval 1 to 28 (MDEAPVTRSTLNVNSQQKSKAKNKIKNT) is disordered. Residues 1–68 (MDEAPVTRST…GKGNCSPPWR (68 aa)) are Cytoplasmic-facing. Polar residues predominate over residues 7–18 (TRSTLNVNSQQK). A helical; Signal-anchor for type II membrane protein membrane pass occupies residues 69-89 (LLSSVLGAMCLLLMAVAMVMT). Over 90 to 226 (TFTTKSSSER…ANKLTYICKK (137 aa)) the chain is Extracellular. 3 disulfides stabilise this stretch: C113/C124, C141/C224, and C202/C216. The region spanning 120 to 225 (FRCSCYFFSK…CANKLTYICK (106 aa)) is the C-type lectin domain. A glycan (N-linked (GlcNAc...) asparagine) is linked at N145.

As to quaternary structure, heterodimer; with KLRI1 or KLRI2. Expressed in natural killer (NK) cells (at protein level). Also detected in natural killer T (NKT) cells (at protein level). Has little or no expression in T cells (at protein level).

It localises to the cell membrane. Lectin-like receptor for natural killer (NK) cells. Can either inhibit or activate NK cell cytotoxic activity, depending on its binding partner. Heterodimer formation with KLRI1 mediates NK cell inhibition whereas heterodimer formation with KLRI2 mediates NK cell activation. Plays a role in allogeneic recognition by the immune system. The sequence is that of Killer cell lectin-like receptor subfamily E member 1 from Mus musculus (Mouse).